A 329-amino-acid chain; its full sequence is Phosphate acyltransferase (329 aa).

The protein belongs to the PlsX family. Homodimer. Probably interacts with PlsY.

It is found in the cytoplasm. It carries out the reaction a fatty acyl-[ACP] + phosphate = an acyl phosphate + holo-[ACP]. It participates in lipid metabolism; phospholipid metabolism. Its function is as follows. Catalyzes the reversible formation of acyl-phosphate (acyl-PO(4)) from acyl-[acyl-carrier-protein] (acyl-ACP). This enzyme utilizes acyl-ACP as fatty acyl donor, but not acyl-CoA. This chain is Phosphate acyltransferase, found in Shouchella clausii (strain KSM-K16) (Alkalihalobacillus clausii).